The chain runs to 307 residues: Mitochondrial 2-oxodicarboxylate carrier 2 (307 aa).

Helical transmembrane passes span 10 to 30 (LPFI…LTVM), 76 to 95 (SRLY…KRAT), 122 to 142 (IAAG…FELI), 171 to 191 (GLYK…GGYF), 215 to 235 (LIAG…FDVV), and 280 to 300 (CRLA…MNFF). Solcar repeat units lie at residues 10–106 (LPFI…YQKI), 116–200 (TTQK…VRNS), and 209–299 (QKTR…MMNF).

The protein belongs to the mitochondrial carrier (TC 2.A.29) family.

It is found in the mitochondrion inner membrane. Its function is as follows. Transports C5-C7 oxodicarboxylates across the inner membranes of mitochondria. Can transport 2-oxoadipate, 2-oxoglutarate, adipate, glutarate, 2-oxopimelate, oxaloacetate, citrate and malate. The main physiological role is probably to supply 2-oxoadipate and 2-oxoglutarate from the mitochondrial matrix to the cytosol where they are used in the biosynthesis of lysine and glutamate, respectively, and in lysine catabolism. The chain is Mitochondrial 2-oxodicarboxylate carrier 2 (ODC2) from Saccharomyces cerevisiae (strain ATCC 204508 / S288c) (Baker's yeast).